Consider the following 430-residue polypeptide: 3-phosphoshikimate 1-carboxyvinyltransferase (430 aa).

3 residues coordinate 3-phosphoshikimate: Lys-20, Ser-21, and Arg-25. Lys-20 contributes to the phosphoenolpyruvate binding site. Phosphoenolpyruvate contacts are provided by Gly-92 and Arg-120. 3-phosphoshikimate contacts are provided by Ser-166, Gln-168, Asp-312, and Lys-339. Gln-168 contributes to the phosphoenolpyruvate binding site. Asp-312 (proton acceptor) is an active-site residue. Phosphoenolpyruvate-binding residues include Arg-343 and Arg-387.

It belongs to the EPSP synthase family. As to quaternary structure, monomer.

The protein localises to the cytoplasm. The catalysed reaction is 3-phosphoshikimate + phosphoenolpyruvate = 5-O-(1-carboxyvinyl)-3-phosphoshikimate + phosphate. Its pathway is metabolic intermediate biosynthesis; chorismate biosynthesis; chorismate from D-erythrose 4-phosphate and phosphoenolpyruvate: step 6/7. Catalyzes the transfer of the enolpyruvyl moiety of phosphoenolpyruvate (PEP) to the 5-hydroxyl of shikimate-3-phosphate (S3P) to produce enolpyruvyl shikimate-3-phosphate and inorganic phosphate. The sequence is that of 3-phosphoshikimate 1-carboxyvinyltransferase from Lactococcus lactis subsp. cremoris (strain SK11).